Here is a 315-residue protein sequence, read N- to C-terminus: Glycine--tRNA ligase alpha subunit (315 aa).

The protein belongs to the class-II aminoacyl-tRNA synthetase family. As to quaternary structure, tetramer of two alpha and two beta subunits.

It is found in the cytoplasm. The enzyme catalyses tRNA(Gly) + glycine + ATP = glycyl-tRNA(Gly) + AMP + diphosphate. This is Glycine--tRNA ligase alpha subunit from Pseudomonas putida (strain GB-1).